Consider the following 401-residue polypeptide: 8-amino-7-oxononanoate synthase (401 aa).

Arg-24 is a binding site for substrate. Position 111–112 (111–112 (GF)) interacts with pyridoxal 5'-phosphate. His-137 contacts substrate. Pyridoxal 5'-phosphate is bound by residues Ser-183, His-211, and Thr-240. Lys-243 is modified (N6-(pyridoxal phosphate)lysine). Position 357 (Thr-357) interacts with substrate.

This sequence belongs to the class-II pyridoxal-phosphate-dependent aminotransferase family. BioF subfamily. As to quaternary structure, homodimer. Requires pyridoxal 5'-phosphate as cofactor.

The enzyme catalyses 6-carboxyhexanoyl-[ACP] + L-alanine + H(+) = (8S)-8-amino-7-oxononanoate + holo-[ACP] + CO2. The protein operates within cofactor biosynthesis; biotin biosynthesis. Catalyzes the decarboxylative condensation of pimeloyl-[acyl-carrier protein] and L-alanine to produce 8-amino-7-oxononanoate (AON), [acyl-carrier protein], and carbon dioxide. This is 8-amino-7-oxononanoate synthase from Xanthomonas campestris pv. campestris (strain B100).